The following is a 196-amino-acid chain: Peptide deformylase (196 aa).

Fe cation-binding residues include cysteine 97 and histidine 139. Glutamate 140 is a catalytic residue. Histidine 143 serves as a coordination point for Fe cation. Basic and acidic residues predominate over residues leucine 171–alanine 187. The tract at residues leucine 171–leucine 196 is disordered.

It belongs to the polypeptide deformylase family. The cofactor is Fe(2+).

The enzyme catalyses N-terminal N-formyl-L-methionyl-[peptide] + H2O = N-terminal L-methionyl-[peptide] + formate. Its function is as follows. Removes the formyl group from the N-terminal Met of newly synthesized proteins. Requires at least a dipeptide for an efficient rate of reaction. N-terminal L-methionine is a prerequisite for activity but the enzyme has broad specificity at other positions. The chain is Peptide deformylase from Methylocella silvestris (strain DSM 15510 / CIP 108128 / LMG 27833 / NCIMB 13906 / BL2).